Here is a 151-residue protein sequence, read N- to C-terminus: uncharacterized protein (151 aa).

The interval Met-89–Arg-151 is disordered. 2 stretches are compositionally biased toward basic and acidic residues: residues Lys-91 to Asp-105 and Asp-112 to Arg-151.

This sequence to C.plantagineum desiccation-related protein clone PCC3-06.

This is an uncharacterized protein from Bacillus subtilis (strain 168).